A 670-amino-acid polypeptide reads, in one-letter code: UvrABC system protein B (670 aa).

The Helicase ATP-binding domain maps to 26-183 (NGLKSGLAFQ…QRLVDLQYNR (158 aa)). Residue 39 to 46 (GVTGSGKT) participates in ATP binding. Positions 92 to 115 (YYDYYQPEAYVPSSDSFIEKDAAI) match the Beta-hairpin motif. In terms of domain architecture, Helicase C-terminal spans 431 to 597 (QVDDLLSEIN…GLSKQVNDVM (167 aa)). The region spanning 630-665 (LKQIALSEKQMFACAKNLEFEKAALFRDEVTKLHEQ) is the UVR domain.

This sequence belongs to the UvrB family. Forms a heterotetramer with UvrA during the search for lesions. Interacts with UvrC in an incision complex.

It is found in the cytoplasm. Its function is as follows. The UvrABC repair system catalyzes the recognition and processing of DNA lesions. A damage recognition complex composed of 2 UvrA and 2 UvrB subunits scans DNA for abnormalities. Upon binding of the UvrA(2)B(2) complex to a putative damaged site, the DNA wraps around one UvrB monomer. DNA wrap is dependent on ATP binding by UvrB and probably causes local melting of the DNA helix, facilitating insertion of UvrB beta-hairpin between the DNA strands. Then UvrB probes one DNA strand for the presence of a lesion. If a lesion is found the UvrA subunits dissociate and the UvrB-DNA preincision complex is formed. This complex is subsequently bound by UvrC and the second UvrB is released. If no lesion is found, the DNA wraps around the other UvrB subunit that will check the other stand for damage. The protein is UvrABC system protein B of Psychromonas ingrahamii (strain DSM 17664 / CCUG 51855 / 37).